Consider the following 444-residue polypeptide: Type I restriction enzyme EcoDI specificity subunit (444 aa).

The protein belongs to the type-I restriction system S methylase family. In terms of assembly, the type I restriction/modification system is composed of three polypeptides R, M and S; the restriction enzyme has stoichiometry R(2)M(2)S(1) while the methyltransferase is M(2)S(1).

The specificity (S) subunit of a type I restriction enzyme; this subunit dictates DNA sequence specificity. The M and S subunits together form a methyltransferase (MTase) that methylates two adenine residues of the sequence 5'-TTAN(7)GTCY-3'. In the presence of the R subunit the complex can also act as an endonuclease, binding to the same target sequence but cutting the DNA some distance from this site. Whether the DNA is cut or modified depends on the methylation state of the target sequence. When the target site is unmodified, the DNA is cut. When the target site is hemimethylated, the complex acts as a maintenance MTase modifying the DNA so that both strands become methylated. After locating a non-methylated recognition site, the enzyme complex serves as a molecular motor that translocates DNA in an ATP-dependent manner until a collision occurs that triggers cleavage. The protein is Type I restriction enzyme EcoDI specificity subunit of Escherichia coli.